Consider the following 45-residue polypeptide: Large ribosomal subunit protein bL34 (45 aa).

A compositionally biased stretch (basic residues) spans 1-20 (MSKRTYQPNKRKRLKTHGFR). The tract at residues 1-45 (MSKRTYQPNKRKRLKTHGFRSRMSTASGRRIISCRRRKNRETLTA) is disordered.

The protein belongs to the bacterial ribosomal protein bL34 family.

This chain is Large ribosomal subunit protein bL34, found in Tropheryma whipplei (strain Twist) (Whipple's bacillus).